Consider the following 73-residue polypeptide: Putative membrane protein insertion efficiency factor (73 aa).

Belongs to the UPF0161 family.

It localises to the cell inner membrane. In terms of biological role, could be involved in insertion of integral membrane proteins into the membrane. The protein is Putative membrane protein insertion efficiency factor of Neisseria meningitidis serogroup C (strain 053442).